We begin with the raw amino-acid sequence, 166 residues long: Transcriptional repressor NrdR (166 aa).

A zinc finger spans residues 3-34; sequence CPFCHFVETDVIDTRKLYEGEVIRRRRRCRAC. The ATP-cone domain occupies 49–139; that stretch reads LMVVKKDGTR…VYRAFTDIGK (91 aa).

It belongs to the NrdR family. Zn(2+) is required as a cofactor.

Negatively regulates transcription of bacterial ribonucleotide reductase nrd genes and operons by binding to NrdR-boxes. In Chloroflexus aurantiacus (strain ATCC 29364 / DSM 637 / Y-400-fl), this protein is Transcriptional repressor NrdR.